The sequence spans 371 residues: uncharacterized protein (371 aa).

Residues 287–323 (EVVTALDRYRQHLRETRERLEEKQGKLLEELKGYESM) are a coiled coil.

This is an uncharacterized protein from Aspergillus fumigatus (strain ATCC MYA-4609 / CBS 101355 / FGSC A1100 / Af293) (Neosartorya fumigata).